We begin with the raw amino-acid sequence, 184 residues long: ATP synthase subunit b (184 aa).

The chain crosses the membrane as a helical span at residues 25 to 45 (IFPSWPIMLATLVSFTILLVV).

Belongs to the ATPase B chain family. F-type ATPases have 2 components, F(1) - the catalytic core - and F(0) - the membrane proton channel. F(1) has five subunits: alpha(3), beta(3), gamma(1), delta(1), epsilon(1). F(0) has three main subunits: a(1), b(2) and c(10-14). The alpha and beta chains form an alternating ring which encloses part of the gamma chain. F(1) is attached to F(0) by a central stalk formed by the gamma and epsilon chains, while a peripheral stalk is formed by the delta and b chains.

It is found in the cell membrane. F(1)F(0) ATP synthase produces ATP from ADP in the presence of a proton or sodium gradient. F-type ATPases consist of two structural domains, F(1) containing the extramembraneous catalytic core and F(0) containing the membrane proton channel, linked together by a central stalk and a peripheral stalk. During catalysis, ATP synthesis in the catalytic domain of F(1) is coupled via a rotary mechanism of the central stalk subunits to proton translocation. In terms of biological role, component of the F(0) channel, it forms part of the peripheral stalk, linking F(1) to F(0). This chain is ATP synthase subunit b, found in Mycoplasma mobile (strain ATCC 43663 / 163K / NCTC 11711) (Mesomycoplasma mobile).